An 858-amino-acid chain; its full sequence is Respiratory burst oxidase homolog protein D (858 aa).

Basic and acidic residues predominate over residues 1–13 (MQNPEDHHSDREL). Residues 1–27 (MQNPEDHHSDRELSSPSNTTKSNDDKN) are disordered. Residues 1-318 (MQNPEDHHSD…KYFLLDNWRR (318 aa)) lie on the Cytoplasmic side of the membrane. EF-hand-like regions lie at residues 134 to 144 (TATSDSLLPRA) and 171 to 182 (RNITSGCISKEQ). 2 consecutive EF-hand domains span residues 194-229 (SFDS…SASA) and 238-273 (QAAE…APIQ). Asp-207, Asp-209, Asp-211, Arg-213, and Glu-218 together coordinate Ca(2+). The chain crosses the membrane as a helical span at residues 319-339 (VWVLLLWIGVMAGLFAYKYVQ). Topologically, residues 340-351 (YKNKAAFNVMGH) are extracellular. A helical membrane pass occupies residues 352 to 372 (CVCVAKGAAEVLKLNMALILL). Positions 357–514 (KGAAEVLKLN…LFVIVYSLLI (158 aa)) constitute a Ferric oxidoreductase domain. Residues 373 to 397 (PVCRNTITWLRNKTKLGGAVPFDDN) are Cytoplasmic-facing. Residues 398–418 (INFHKVVAGAIAVGVGIHVLA) form a helical membrane-spanning segment. Residues 419–454 (HMTCDFPRLLNASPEKYKPMEPYFGDQPRNYWHFVK) are Extracellular-facing. Residues 455-475 (GVEGVSGIIMVVLMSIAFTLA) form a helical membrane-spanning segment. Residues 476–497 (SQRFRRNKIRLPRPLNKLTGFN) are Cytoplasmic-facing. The chain crosses the membrane as a helical span at residues 498 to 518 (AFWYSHHLFVIVYSLLIVHGI). At 519–675 (ELYLTKEWYK…APAQDYKEYE (157 aa)) the chain is on the extracellular side. The FAD-binding FR-type domain occupies 548-670 (LRAFRSSVKD…DGPYGAPAQD (123 aa)). Residues 676-696 (VLLLVGLGIGATPMISIVKDI) form a helical membrane-spanning segment. The Cytoplasmic segment spans residues 697–858 (VNNMKEEKYD…TKFDFHKENF (162 aa)).

It belongs to the RBOH (TC 5.B.1.3) family. Monomer and homodimer. Post-translationally, phosphorylated by CPK. In terms of tissue distribution, expressed in leaves.

Its subcellular location is the membrane. Functionally, calcium-dependent NADPH oxidase that generates superoxide. May be responsible for the oxidative burst in response to pathogen attack in the leaves. The protein is Respiratory burst oxidase homolog protein D (RBOHD) of Solanum tuberosum (Potato).